Reading from the N-terminus, the 194-residue chain is dITP/XTP pyrophosphatase (194 aa).

Residue 8-13 (TSNPGK) coordinates substrate. Glu-38 and Asp-67 together coordinate Mg(2+). Residue Asp-67 is the Proton acceptor of the active site. Residues Ser-68, 152–155 (FGYD), Lys-175, and 180–181 (HR) each bind substrate.

It belongs to the HAM1 NTPase family. Homodimer. Requires Mg(2+) as cofactor.

The enzyme catalyses XTP + H2O = XMP + diphosphate + H(+). The catalysed reaction is dITP + H2O = dIMP + diphosphate + H(+). It catalyses the reaction ITP + H2O = IMP + diphosphate + H(+). Pyrophosphatase that catalyzes the hydrolysis of nucleoside triphosphates to their monophosphate derivatives, with a high preference for the non-canonical purine nucleotides XTP (xanthosine triphosphate), dITP (deoxyinosine triphosphate) and ITP. Seems to function as a house-cleaning enzyme that removes non-canonical purine nucleotides from the nucleotide pool, thus preventing their incorporation into DNA/RNA and avoiding chromosomal lesions. This is dITP/XTP pyrophosphatase from Legionella pneumophila (strain Paris).